We begin with the raw amino-acid sequence, 1032 residues long: Exo-beta-D-glucosaminidase (1032 aa).

The signal sequence occupies residues 1 to 32 (MSFRQKRTRIPLLAMTVTALAAAVCGVTTAPA). The propeptide occupies 33–46 (ATGAEVAVPLSVGA). Catalysis depends on Asp469, which acts as the Proton donor. Glu541 (nucleophile) is an active-site residue. Positions 883–908 (SVRISGWNTGTQTVPADGSGPGPSDP) are disordered. In terms of domain architecture, CBM6 spans 909–1032 (VDYQAEDATI…GGPNVDKITL (124 aa)).

It belongs to the glycosyl hydrolase 2 family. As to quaternary structure, monomer.

The protein localises to the secreted. It carries out the reaction Hydrolysis of chitosan or chitosan oligosaccharides to remove successive D-glucosamine residues from the non-reducing termini.. Hydrolyzes chitosan and chitooligosaccharides with retention of anomeric configuration. Has maximum activity on chitotetraose, chitopentaose and their corresponding alcohols, with a slight decrease in the rate of hydrolysis on longer chains. Has no activity against beta-D-glucopyranoside, beta-D-xylopyranoside, beta-D-mannoside, beta-D-glucuronide, beta-D-galactoside, beta-D-N-acetylgalactosamide, beta-D-N-acetylglucosaminide and alpha-D-N-acetylglucosaminide. The sequence is that of Exo-beta-D-glucosaminidase from Amycolatopsis orientalis (Nocardia orientalis).